The chain runs to 338 residues: Ketol-acid reductoisomerase (NADP(+)) (338 aa).

The KARI N-terminal Rossmann domain maps to 1-181 (MKIYYDKDCN…GGGRAGIIET (181 aa)). NADP(+)-binding positions include 24–27 (YGSQ), lysine 47, serine 50, serine 52, and 82–85 (DEIQ). Histidine 107 is a catalytic residue. An NADP(+)-binding site is contributed by glycine 133. Positions 182 to 327 (SFKEETETDL…ARLRSMMSWI (146 aa)) constitute a KARI C-terminal knotted domain. 4 residues coordinate Mg(2+): aspartate 190, glutamate 194, glutamate 226, and glutamate 230. A substrate-binding site is contributed by serine 251.

It belongs to the ketol-acid reductoisomerase family. It depends on Mg(2+) as a cofactor.

The catalysed reaction is (2R)-2,3-dihydroxy-3-methylbutanoate + NADP(+) = (2S)-2-acetolactate + NADPH + H(+). The enzyme catalyses (2R,3R)-2,3-dihydroxy-3-methylpentanoate + NADP(+) = (S)-2-ethyl-2-hydroxy-3-oxobutanoate + NADPH + H(+). It participates in amino-acid biosynthesis; L-isoleucine biosynthesis; L-isoleucine from 2-oxobutanoate: step 2/4. The protein operates within amino-acid biosynthesis; L-valine biosynthesis; L-valine from pyruvate: step 2/4. Involved in the biosynthesis of branched-chain amino acids (BCAA). Catalyzes an alkyl-migration followed by a ketol-acid reduction of (S)-2-acetolactate (S2AL) to yield (R)-2,3-dihydroxy-isovalerate. In the isomerase reaction, S2AL is rearranged via a Mg-dependent methyl migration to produce 3-hydroxy-3-methyl-2-ketobutyrate (HMKB). In the reductase reaction, this 2-ketoacid undergoes a metal-dependent reduction by NADPH to yield (R)-2,3-dihydroxy-isovalerate. This chain is Ketol-acid reductoisomerase (NADP(+)), found in Geobacter sulfurreducens (strain ATCC 51573 / DSM 12127 / PCA).